Reading from the N-terminus, the 161-residue chain is Ubiquitin-conjugating enzyme E2Q-like protein 1 (161 aa).

The 154-residue stretch at 1–154 (MKELQDIARL…VKTHEKYGWV (154 aa)) folds into the UBC core domain. Cysteine 88 functions as the Glycyl thioester intermediate in the catalytic mechanism.

Belongs to the ubiquitin-conjugating enzyme family. Interacts with FBXW7.

The protein localises to the nucleus. The catalysed reaction is S-ubiquitinyl-[E1 ubiquitin-activating enzyme]-L-cysteine + [E2 ubiquitin-conjugating enzyme]-L-cysteine = [E1 ubiquitin-activating enzyme]-L-cysteine + S-ubiquitinyl-[E2 ubiquitin-conjugating enzyme]-L-cysteine.. The protein operates within protein modification; protein ubiquitination. Its function is as follows. Probable E2 ubiquitin-protein ligase that catalyzes the covalent attachment of ubiquitin to target proteins. May facilitate the monoubiquitination and degradation of MTOR and CCNE1 through interaction with FBXW7. The protein is Ubiquitin-conjugating enzyme E2Q-like protein 1 (UBE2QL1) of Homo sapiens (Human).